The chain runs to 336 residues: Fructose-1,6-bisphosphatase class 1 (336 aa).

4 residues coordinate Mg(2+): E92, D115, L117, and D118. Substrate contacts are provided by residues 118-121 (DGSS), N211, Y244, 262-264 (YLY), and K274. Position 280 (E280) interacts with Mg(2+).

This sequence belongs to the FBPase class 1 family. In terms of assembly, homotetramer. It depends on Mg(2+) as a cofactor.

The protein localises to the cytoplasm. It carries out the reaction beta-D-fructose 1,6-bisphosphate + H2O = beta-D-fructose 6-phosphate + phosphate. It functions in the pathway carbohydrate biosynthesis; gluconeogenesis. The sequence is that of Fructose-1,6-bisphosphatase class 1 from Aliivibrio salmonicida (strain LFI1238) (Vibrio salmonicida (strain LFI1238)).